Consider the following 431-residue polypeptide: MYRFAPSPTGDMHIGNLRAAIFNYICSLQDKSGFILRIEDTDKERNIEGKEKDILEILSKFGIKPEQIYIQSENLKFHRQLASKLLIDKKAFACFCTEEELEAKKQKAKEQGVAYRYDGTCERLSDAEVLNCEKPFVIRMKKPTRTMSFTDAIKGELSFEPDAVDSFVIMRADKTPTYNFACAVDDMLEGVTFVIRGEDHVSNTPKQDLIREGLGYTGKMNYAHLPILLNIEGKKMSKRENESSVKWLFEQGFLPEAIANYLILLGNKTPTEIFTIEDAVKWFDITKISRSPARFDVKKLEQINREHIKLASKERIKEIFGVDESKVELVKFYTQESSLVPEIKAKVEAIYSPKIAPDEYKNEFEIIKKAARNLKPCESFDEFKKELMGATNLKGKNFFMPLRALLTNDLHGPELSELYPLIKDDLAKILI.

A 'HIGH' region motif is present at residues 6–16; that stretch reads PSPTGDMHIGN. Residues 235-239 carry the 'KMSKS' region motif; sequence KMSKR. Position 238 (K238) interacts with ATP.

This sequence belongs to the class-I aminoacyl-tRNA synthetase family. Glutamate--tRNA ligase type 1 subfamily. Monomer.

It is found in the cytoplasm. It carries out the reaction tRNA(Glu) + L-glutamate + ATP = L-glutamyl-tRNA(Glu) + AMP + diphosphate. Catalyzes the attachment of glutamate to tRNA(Glu) in a two-step reaction: glutamate is first activated by ATP to form Glu-AMP and then transferred to the acceptor end of tRNA(Glu). The polypeptide is Glutamate--tRNA ligase 1 (Campylobacter concisus (strain 13826)).